An 864-amino-acid polypeptide reads, in one-letter code: Leucine--tRNA ligase (864 aa).

Residues 50–60 (PYPSGKIHMGH) carry the 'HIGH' region motif. Residues 622–626 (KMSKS) carry the 'KMSKS' region motif. Lysine 625 contacts ATP.

Belongs to the class-I aminoacyl-tRNA synthetase family.

Its subcellular location is the cytoplasm. The catalysed reaction is tRNA(Leu) + L-leucine + ATP = L-leucyl-tRNA(Leu) + AMP + diphosphate. In Acidiphilium cryptum (strain JF-5), this protein is Leucine--tRNA ligase.